A 348-amino-acid polypeptide reads, in one-letter code: Dihydroorotase (348 aa).

Positions 17 and 19 each coordinate Zn(2+). Residues 19 to 21 (HLR) and Asn45 each bind substrate. The Zn(2+) site is built by Lys103, His140, and His178. N6-carboxylysine is present on Lys103. His140 is a substrate binding site. Leu223 provides a ligand contact to substrate. Asp251 is a Zn(2+) binding site. Residue Asp251 is part of the active site. The substrate site is built by His255 and Ala267.

This sequence belongs to the metallo-dependent hydrolases superfamily. DHOase family. Class II DHOase subfamily. Homodimer. Zn(2+) is required as a cofactor.

The catalysed reaction is (S)-dihydroorotate + H2O = N-carbamoyl-L-aspartate + H(+). It functions in the pathway pyrimidine metabolism; UMP biosynthesis via de novo pathway; (S)-dihydroorotate from bicarbonate: step 3/3. Functionally, catalyzes the reversible cyclization of carbamoyl aspartate to dihydroorotate. This Salmonella typhimurium (strain LT2 / SGSC1412 / ATCC 700720) protein is Dihydroorotase.